Here is a 320-residue protein sequence, read N- to C-terminus: ATP-dependent 6-phosphofructokinase (320 aa).

Glycine 12 provides a ligand contact to ATP. ADP-binding positions include 22–26 and 55–60; these read RGVVR and RYSVSD. Residues 73-74 and 103-106 contribute to the ATP site; these read RF and GDGS. Position 104 (aspartate 104) interacts with Mg(2+). 126–128 contributes to the substrate binding site; it reads TID. Residue aspartate 128 is the Proton acceptor of the active site. Arginine 155 serves as a coordination point for ADP. Residues arginine 163 and 170–172 contribute to the substrate site; that span reads MGR. Residues 186-188, lysine 212, and 214-216 each bind ADP; these read GCE and KKH. Substrate-binding positions include glutamate 223, arginine 244, and 250–253; that span reads HIQR.

This sequence belongs to the phosphofructokinase type A (PFKA) family. ATP-dependent PFK group I subfamily. Prokaryotic clade 'B1' sub-subfamily. In terms of assembly, homotetramer. Mg(2+) is required as a cofactor.

It localises to the cytoplasm. The catalysed reaction is beta-D-fructose 6-phosphate + ATP = beta-D-fructose 1,6-bisphosphate + ADP + H(+). It participates in carbohydrate degradation; glycolysis; D-glyceraldehyde 3-phosphate and glycerone phosphate from D-glucose: step 3/4. Its activity is regulated as follows. Allosterically activated by ADP and other diphosphonucleosides, and allosterically inhibited by phosphoenolpyruvate. Catalyzes the phosphorylation of D-fructose 6-phosphate to fructose 1,6-bisphosphate by ATP, the first committing step of glycolysis. This Buchnera aphidicola subsp. Baizongia pistaciae (strain Bp) protein is ATP-dependent 6-phosphofructokinase.